Here is a 519-residue protein sequence, read N- to C-terminus: 2-isopropylmalate synthase (519 aa).

One can recognise a Pyruvate carboxyltransferase domain in the interval 5–267 (VIIFDTTLRD…QTRINHKEIY (263 aa)). Mn(2+)-binding residues include Asp-14, His-202, His-204, and Asn-238. The interval 392–519 (VMNYFNTQSG…RKHHTTQEAV (128 aa)) is regulatory domain.

It belongs to the alpha-IPM synthase/homocitrate synthase family. LeuA type 1 subfamily. As to quaternary structure, homodimer. Mn(2+) serves as cofactor.

It localises to the cytoplasm. It carries out the reaction 3-methyl-2-oxobutanoate + acetyl-CoA + H2O = (2S)-2-isopropylmalate + CoA + H(+). Its pathway is amino-acid biosynthesis; L-leucine biosynthesis; L-leucine from 3-methyl-2-oxobutanoate: step 1/4. In terms of biological role, catalyzes the condensation of the acetyl group of acetyl-CoA with 3-methyl-2-oxobutanoate (2-ketoisovalerate) to form 3-carboxy-3-hydroxy-4-methylpentanoate (2-isopropylmalate). In Proteus mirabilis (strain HI4320), this protein is 2-isopropylmalate synthase.